Here is a 150-residue protein sequence, read N- to C-terminus: 3-dehydroquinate dehydratase (150 aa).

Catalysis depends on Tyr-26, which acts as the Proton acceptor. Positions 77, 83, and 90 each coordinate substrate. His-103 acts as the Proton donor in catalysis. Residues 104 to 105 and Arg-114 each bind substrate; that span reads LS.

The protein belongs to the type-II 3-dehydroquinase family. Homododecamer.

It catalyses the reaction 3-dehydroquinate = 3-dehydroshikimate + H2O. It functions in the pathway metabolic intermediate biosynthesis; chorismate biosynthesis; chorismate from D-erythrose 4-phosphate and phosphoenolpyruvate: step 3/7. In terms of biological role, catalyzes a trans-dehydration via an enolate intermediate. The sequence is that of 3-dehydroquinate dehydratase from Mannheimia succiniciproducens (strain KCTC 0769BP / MBEL55E).